A 1138-amino-acid polypeptide reads, in one-letter code: Solute carrier family 12 member 5 (1138 aa).

Disordered regions lie at residues 1 to 62 (MSRR…KGRE) and 96 to 116 (QGSR…KPVQ). At 1-98 (MSRRFTVTSL…ANYTNLPQGS (98 aa)) the chain is on the cytoplasmic side. The segment covering 21-45 (PESRRHSVADPRRLPREDVKGDGNP) has biased composition (basic and acidic residues). Positions 46-55 (KESSPFINST) are enriched in polar residues. A Phosphothreonine modification is found at threonine 57. The segment covering 98 to 111 (SREHEEAENNEGGK) has biased composition (basic and acidic residues). A discontinuously helical membrane pass occupies residues 99-120 (REHEEAENNEGGKKKPVQAPRM). Position 113 (lysine 113) interacts with K(+). Residues 121-129 (GTFMGVYLP) lie on the Extracellular side of the membrane. A helical membrane pass occupies residues 130 to 151 (CLQNIFGVILFLRLTWVVGIAG). Residues 152–174 (IMESFCMVFICCSCTMLTAISMS) lie on the Cytoplasmic side of the membrane. A helical membrane pass occupies residues 175–203 (AIATNGVVPAGGSYYMISRSLGPEFGGAV). Alanine 184 serves as a coordination point for chloride. The Extracellular segment spans residues 204 to 229 (GLCFYLGTTFAGAMYILGTIEILLAY). A run of 2 helical transmembrane segments spans residues 230–250 (LFPA…AAML) and 251–276 (NNMR…KYVN). Topologically, residues 277–402 (KFALVFLGCV…ERRGMPSVGL (126 aa)) are extracellular. Cysteine 310 and cysteine 325 form a disulfide bridge. N-linked (GlcNAc...) asparagine glycans are attached at residues asparagine 314, asparagine 333, asparagine 351, and asparagine 362. Cysteine 345 and cysteine 354 form a disulfide bridge. Residues 403–420 (ADGTPVDMDHPYVFSDMT) traverse the membrane as a helical segment. Position 410 (methionine 410) interacts with K(+). Chloride contacts are provided by tyrosine 414 and valine 415. Over 421 to 429 (SYFTLLVGI) the chain is Cytoplasmic. A helical transmembrane segment spans residues 430–453 (YFPSVTGIMAGSNRSGDLRDAQKS). Aspartate 446 is a binding site for K(+). Over 454-485 (IPTGTILAIATTSAVYISSVVLFGACIEGVVL) the chain is Extracellular. A helical transmembrane segment spans residues 486–513 (RDKFGEAVNGNLVVGTLAWPSPWVIVIG). Residues 514-534 (SFFSTCGAGLQSLTGAPRLLQ) are Cytoplasmic-facing. Helical transmembrane passes span 535 to 555 (AISR…KANG) and 556 to 578 (EPTW…ASLD). Glutamate 569 provides a ligand contact to chloride. Residues 579 to 592 (EVAPILSMFFLMCY) lie on the Cytoplasmic side of the membrane. 2 helical membrane-spanning segments follow: residues 593–615 (MFVN…PRFR) and 616–632 (YYHW…CLAL). The Cytoplasmic segment spans residues 633–1138 (MFICSWYYAL…GGREVITIYS (506 aa)). The scissor helix stretch occupies residues 667–681 (GIRGLSLSAARYALL). Residue threonine 929 is modified to Phosphothreonine; by OXSR1 and STK39. The tract at residues 943–1051 (HLTKNERERE…GPSPVSSEGI (109 aa)) is disordered. Over residues 945–962 (TKNEREREIQSITDESRG) the composition is skewed to basic and acidic residues. Positions 982–994 (TACDNEEKPEEEV) are enriched in acidic residues. Over residues 1001–1012 (SAPSCPSSSPSP) the composition is skewed to low complexity. The segment covering 1019 to 1041 (ERETDPEVHLTWTKDKSVAEKNK) has biased composition (basic and acidic residues). The residue at position 1029 (threonine 1029) is a Phosphothreonine; by OXSR1 and STK39. A phosphoserine mark is found at serine 1044, serine 1047, and serine 1048.

The protein belongs to the SLC12A transporter family. K/Cl co-transporter subfamily. In terms of assembly, homodimer; adopts a domain-swap conformation at the scissor helices connecting the transmembrane domain and C-terminal domain. Heterodimer with K-Cl cotransporters SLC12A6 and SLC12A7. Interacts with AP2A1. In terms of processing, phosphorylated at Thr-929 and Thr-1029 by OXSR1/OSR1 and STK39/SPAK downstream of WNK kinases (WNK1, WNK2, WNK3 or WNK4), inhibiting the potassium-chloride cotransport activity. In terms of tissue distribution, expressed in brainstem, spinal cord and olfactory bulb of 17 dpc embryos. Expressed in all parts of the brain and spinal cord in postnatal day 14 mice. As to expression, expressed in brainstem and spinal cord of 17 dpc embryos. Expressed in all parts of the brain and spinal cord in postnatal day 14 mice.

It is found in the cell membrane. The protein localises to the cell projection. The protein resides in the dendrite. The catalysed reaction is K(+)(in) + chloride(in) = K(+)(out) + chloride(out). Inhibited following phosphorylation by OXSR1/OSR1 and STK39/SPAK: phosphorylation takes place downstream of WNK kinases (WNK1, WNK2, WNK3 or WNK4) in response to hyperosmotic stress and subsequent cell shrinkage. Mediates electroneutral potassium-chloride cotransport in mature neurons and is required for neuronal Cl(-) homeostasis. As major extruder of intracellular chloride, it establishes the low neuronal Cl(-) levels required for chloride influx after binding of GABA-A and glycine to their receptors, with subsequent hyperpolarization and neuronal inhibition. Involved in the regulation of dendritic spine formation and maturation. This chain is Solute carrier family 12 member 5 (Slc12a5), found in Mus musculus (Mouse).